The following is a 75-amino-acid chain: Small ribosomal subunit protein bS18 (75 aa).

The protein belongs to the bacterial ribosomal protein bS18 family. Part of the 30S ribosomal subunit. Forms a tight heterodimer with protein bS6.

Binds as a heterodimer with protein bS6 to the central domain of the 16S rRNA, where it helps stabilize the platform of the 30S subunit. The chain is Small ribosomal subunit protein bS18 from Cellvibrio japonicus (strain Ueda107) (Pseudomonas fluorescens subsp. cellulosa).